We begin with the raw amino-acid sequence, 367 residues long: Protein pxr1 (367 aa).

Disordered stretches follow at residues 1–28 (MGLSAPKNKIKLSHDPNNTKWSGNTDSF) and 156–336 (KALK…PMGI). Residues 15–27 (DPNNTKWSGNTDS) show a composition bias toward polar residues. The G-patch domain maps to 25 to 79 (TDSFGHRMMKSQGWTPGEYLGAKDAAHAEFHTAANASHIRVVIKDNNLGLGAKIG). The span at 167 to 182 (SSDDSDSSSDEEEEEK) shows a compositional bias: acidic residues. Composition is skewed to basic residues over residues 209-221 (SKKSKKDKKSKKR), 236-248 (KSKKSKKDRKSKS), and 265-277 (KARKKEKKEKKRR). Residues 282 to 296 (ATAGADTEETSSTSK) are compositionally biased toward low complexity. A compositionally biased stretch (basic residues) spans 297–309 (SSKKNSKKDKHKS). The span at 310-328 (SSASESSTKESTPTVTESS) shows a compositional bias: low complexity.

Belongs to the PINX1 family.

It is found in the nucleus. It localises to the nucleolus. Functionally, involved in rRNA-processing at A0, A1 and A2 sites and negatively regulates telomerase. This Sclerotinia sclerotiorum (strain ATCC 18683 / 1980 / Ss-1) (White mold) protein is Protein pxr1 (pxr1).